The following is a 452-amino-acid chain: Trigger factor (452 aa).

The PPIase FKBP-type domain occupies 171 to 256 (GDRVTISFKG…ATKVEAPQDT (86 aa)).

Belongs to the FKBP-type PPIase family. Tig subfamily.

It localises to the cytoplasm. The enzyme catalyses [protein]-peptidylproline (omega=180) = [protein]-peptidylproline (omega=0). Its function is as follows. Involved in protein export. Acts as a chaperone by maintaining the newly synthesized protein in an open conformation. Functions as a peptidyl-prolyl cis-trans isomerase. The polypeptide is Trigger factor (Rhodopseudomonas palustris (strain HaA2)).